A 468-amino-acid chain; its full sequence is Ribulose bisphosphate carboxylase large chain (468 aa).

Residue Lys5 is modified to N6,N6,N6-trimethyllysine. Substrate contacts are provided by Asn114 and Thr164. Lys166 serves as the catalytic Proton acceptor. Residue Lys168 participates in substrate binding. The Mg(2+) site is built by Lys192, Asp194, and Glu195. The residue at position 192 (Lys192) is an N6-carboxylysine. His285 (proton acceptor) is an active-site residue. Residues Arg286, His318, and Ser370 each coordinate substrate.

This sequence belongs to the RuBisCO large chain family. Type I subfamily. Heterohexadecamer of 8 large chains and 8 small chains; disulfide-linked. The disulfide link is formed within the large subunit homodimers. It depends on Mg(2+) as a cofactor. The disulfide bond which can form in the large chain dimeric partners within the hexadecamer appears to be associated with oxidative stress and protein turnover.

It localises to the plastid. It is found in the chloroplast. It carries out the reaction 2 (2R)-3-phosphoglycerate + 2 H(+) = D-ribulose 1,5-bisphosphate + CO2 + H2O. The enzyme catalyses D-ribulose 1,5-bisphosphate + O2 = 2-phosphoglycolate + (2R)-3-phosphoglycerate + 2 H(+). Its function is as follows. RuBisCO catalyzes two reactions: the carboxylation of D-ribulose 1,5-bisphosphate, the primary event in carbon dioxide fixation, as well as the oxidative fragmentation of the pentose substrate in the photorespiration process. Both reactions occur simultaneously and in competition at the same active site. This chain is Ribulose bisphosphate carboxylase large chain, found in Solandra grandiflora (Chalice vine).